The primary structure comprises 373 residues: Phosphoserine aminotransferase (373 aa).

Position 47 (arginine 47) interacts with L-glutamate. Pyridoxal 5'-phosphate contacts are provided by residues 81–82 (AR), tryptophan 113, threonine 164, aspartate 185, and glutamine 208. The residue at position 209 (lysine 209) is an N6-(pyridoxal phosphate)lysine. 250 to 251 (NT) is a binding site for pyridoxal 5'-phosphate.

Belongs to the class-V pyridoxal-phosphate-dependent aminotransferase family. SerC subfamily. In terms of assembly, homodimer. It depends on pyridoxal 5'-phosphate as a cofactor.

The protein localises to the cytoplasm. The catalysed reaction is O-phospho-L-serine + 2-oxoglutarate = 3-phosphooxypyruvate + L-glutamate. It carries out the reaction 4-(phosphooxy)-L-threonine + 2-oxoglutarate = (R)-3-hydroxy-2-oxo-4-phosphooxybutanoate + L-glutamate. It functions in the pathway amino-acid biosynthesis; L-serine biosynthesis; L-serine from 3-phospho-D-glycerate: step 2/3. Its pathway is cofactor biosynthesis; pyridoxine 5'-phosphate biosynthesis; pyridoxine 5'-phosphate from D-erythrose 4-phosphate: step 3/5. Catalyzes the reversible conversion of 3-phosphohydroxypyruvate to phosphoserine and of 3-hydroxy-2-oxo-4-phosphonooxybutanoate to phosphohydroxythreonine. This Buchnera aphidicola subsp. Baizongia pistaciae (strain Bp) protein is Phosphoserine aminotransferase.